Consider the following 195-residue polypeptide: GTP-dependent dephospho-CoA kinase (195 aa).

The GTP site is built by D49, V50, D68, E127, and D150.

The protein belongs to the GTP-dependent DPCK family.

It catalyses the reaction 3'-dephospho-CoA + GTP = GDP + CoA + H(+). Its pathway is cofactor biosynthesis; coenzyme A biosynthesis. Functionally, catalyzes the GTP-dependent phosphorylation of the 3'-hydroxyl group of dephosphocoenzyme A to form coenzyme A (CoA). The sequence is that of GTP-dependent dephospho-CoA kinase from Methanosarcina barkeri (strain Fusaro / DSM 804).